Here is a 331-residue protein sequence, read N- to C-terminus: D-aspartate oxidase 2 (331 aa).

Positions 35, 36, 43, and 307 each coordinate FAD.

This sequence belongs to the DAMOX/DASOX family. FAD is required as a cofactor.

Its subcellular location is the cytoplasm. The catalysed reaction is D-aspartate + O2 + H2O = oxaloacetate + H2O2 + NH4(+). The enzyme catalyses D-glutamate + O2 + H2O = H2O2 + 2-oxoglutarate + NH4(+). Functionally, selectively catalyzes the oxidative deamination of acidic amino acids. May play a role in the egg-laying events and early development of the worm, in addition to quality control of the germ cells. The sequence is that of D-aspartate oxidase 2 from Caenorhabditis briggsae.